Consider the following 216-residue polypeptide: UDP-N-acetylglucosamine transferase subunit ALG14 (216 aa).

Residues 1–3 (MVC) lie on the Lumenal side of the membrane. A helical transmembrane segment spans residues 4-24 (VLVLAAAAGAVAVFLILRIWV). The Cytoplasmic segment spans residues 25 to 216 (VLRSMDVTPR…PKSVYLGRIV (192 aa)).

The protein belongs to the ALG14 family. As to quaternary structure, forms with ALG13 the active heterodimeric UDP-N-acetylglucosamine transferase complex.

The protein resides in the endoplasmic reticulum membrane. In terms of biological role, part of the UDP-N-acetylglucosamine transferase complex that operates in the biosynthetic pathway of dolichol-linked oligosaccharides, the glycan precursors employed in protein asparagine (N)-glycosylation. The assembly of dolichol-linked oligosaccharides begins on the cytosolic side of the endoplasmic reticulum membrane and finishes in its lumen. The sequential addition of sugars to dolichol pyrophosphate produces dolichol-linked oligosaccharides containing fourteen sugars, including two GlcNAcs, nine mannoses and three glucoses. Once assembled, the oligosaccharides are transferred from the lipid to nascent proteins by oligosaccharyltransferases. Functions as a protein-membrane adapter recruiting ALG13 at the cytoplasmic face of the endoplasmic reticulum, where the complex catalyzes the second step of dolichol pyrophosphate biosynthesis, transferring a beta1,4-linked N-acetylglucosamine (GlcNAc) from UDP-GlcNAc to GlcNAc-pyrophosphatedolichol (Gn-PDol) to produce N,N'-diacetylchitobiosyl diphosphodolichol. N,N'-diacetylchitobiosyl diphosphodolichol is a substrate for ALG1, the following enzyme in the biosynthetic pathway. The protein is UDP-N-acetylglucosamine transferase subunit ALG14 of Homo sapiens (Human).